The primary structure comprises 392 residues: Acetyl-CoA acetyltransferase (392 aa).

The active-site Acyl-thioester intermediate is the Cys-85. The CoA site is built by Cys-206, Ser-207, Val-209, and Lys-332. His-336 serves as the catalytic Proton acceptor.

It belongs to the thiolase-like superfamily. Thiolase family. In terms of assembly, interacts with HMG-CoA synthase (HMGCS) that catalyzes the second step in the pathway and with a DUF35 protein. The acetoacetyl-CoA thiolase/HMG-CoA synthase complex channels the intermediate via a fused CoA-binding site, which allows for efficient coupling of the endergonic thiolase reaction with the exergonic HMGCS reaction.

It catalyses the reaction 2 acetyl-CoA = acetoacetyl-CoA + CoA. The protein operates within metabolic intermediate biosynthesis; (R)-mevalonate biosynthesis; (R)-mevalonate from acetyl-CoA: step 1/3. In terms of biological role, catalyzes the condensation of two acetyl-coA molecules into acetoacetyl-CoA. Functions in the mevalonate (MVA) pathway leading to isopentenyl diphosphate (IPP), a key precursor for the biosynthesis of isoprenoid compounds that are building blocks of archaeal membrane lipids. The sequence is that of Acetyl-CoA acetyltransferase from Methanocaldococcus jannaschii (strain ATCC 43067 / DSM 2661 / JAL-1 / JCM 10045 / NBRC 100440) (Methanococcus jannaschii).